Consider the following 180-residue polypeptide: NADH-quinone oxidoreductase subunit I (180 aa).

2 4Fe-4S ferredoxin-type domains span residues 50–80 (LTRD…LQKT) and 90–119 (EFFR…LTPD). [4Fe-4S] cluster is bound by residues Cys-60, Cys-63, Cys-66, Cys-70, Cys-99, Cys-102, Cys-105, and Cys-109.

Belongs to the complex I 23 kDa subunit family. NDH-1 is composed of 13 different subunits. Subunits NuoA, H, J, K, L, M, N constitute the membrane sector of the complex. The cofactor is [4Fe-4S] cluster.

The protein localises to the cell inner membrane. The catalysed reaction is a quinone + NADH + 5 H(+)(in) = a quinol + NAD(+) + 4 H(+)(out). NDH-1 shuttles electrons from NADH, via FMN and iron-sulfur (Fe-S) centers, to quinones in the respiratory chain. The immediate electron acceptor for the enzyme in this species is believed to be ubiquinone. Couples the redox reaction to proton translocation (for every two electrons transferred, four hydrogen ions are translocated across the cytoplasmic membrane), and thus conserves the redox energy in a proton gradient. This chain is NADH-quinone oxidoreductase subunit I, found in Shigella dysenteriae serotype 1 (strain Sd197).